We begin with the raw amino-acid sequence, 287 residues long: Hydroxyethylthiazole kinase (287 aa).

Met50 lines the substrate pocket. ATP-binding residues include Arg126 and Ser185. Gly212 contributes to the substrate binding site.

This sequence belongs to the Thz kinase family. Mg(2+) serves as cofactor.

The catalysed reaction is 5-(2-hydroxyethyl)-4-methylthiazole + ATP = 4-methyl-5-(2-phosphooxyethyl)-thiazole + ADP + H(+). Its pathway is cofactor biosynthesis; thiamine diphosphate biosynthesis; 4-methyl-5-(2-phosphoethyl)-thiazole from 5-(2-hydroxyethyl)-4-methylthiazole: step 1/1. Its function is as follows. Catalyzes the phosphorylation of the hydroxyl group of 4-methyl-5-beta-hydroxyethylthiazole (THZ). The polypeptide is Hydroxyethylthiazole kinase (Methanobrevibacter smithii (strain ATCC 35061 / DSM 861 / OCM 144 / PS)).